Consider the following 276-residue polypeptide: Large ribosomal subunit protein uL2 (276 aa).

A disordered region spans residues 221–276 (RGSAMNPNDHPHGGGEGRAPIGRKSPMTPWGKKARGVKTRDRKKASNALIIRRRTK). The span at 252-276 (KKARGVKTRDRKKASNALIIRRRTK) shows a compositional bias: basic residues.

This sequence belongs to the universal ribosomal protein uL2 family. As to quaternary structure, part of the 50S ribosomal subunit. Forms a bridge to the 30S subunit in the 70S ribosome.

In terms of biological role, one of the primary rRNA binding proteins. Required for association of the 30S and 50S subunits to form the 70S ribosome, for tRNA binding and peptide bond formation. It has been suggested to have peptidyltransferase activity; this is somewhat controversial. Makes several contacts with the 16S rRNA in the 70S ribosome. This is Large ribosomal subunit protein uL2 from Onion yellows phytoplasma (strain OY-M).